The chain runs to 122 residues: Large ribosomal subunit protein uL14c (122 aa).

This sequence belongs to the universal ribosomal protein uL14 family. As to quaternary structure, part of the 50S ribosomal subunit.

It localises to the plastid. Its subcellular location is the chloroplast. Functionally, binds to 23S rRNA. The chain is Large ribosomal subunit protein uL14c from Nicotiana tomentosiformis (Tobacco).